The following is a 485-amino-acid chain: Ribosomal protein S6 kinase beta-2 (485 aa).

Residues 1-26 are disordered; that stretch reads MAAVFDLDLETEEGSEGEGEPEFSPA. The span at 7–21 shows a compositional bias: acidic residues; sequence LDLETEEGSEGEGEP. S15 is modified (phosphoserine). The region spanning 67–328 is the Protein kinase domain; the sequence is FELLSVLGKG…AADVQRHPFF (262 aa). Residues 73–81 and K99 contribute to the ATP site; that span reads LGKGGYGKV. D194 functions as the Proton acceptor in the catalytic mechanism. The 71-residue stretch at 329–399 folds into the AGC-kinase C-terminal domain; that stretch reads RHINWDDLLA…VAPSVLDSIK (71 aa). The segment at 407 to 485 is disordered; sequence KLRSPRRLNS…SKKGRGRSGR (79 aa). S417 bears the Phosphoserine mark. At T420 the chain carries Phosphothreonine. S423 is modified (phosphoserine). Pro residues predominate over residues 436 to 469; that stretch reads SPGPPEPMEPSLPPLLPSPPSPPPTSTAPLPIRP. The short motif at 474-480 is the Nuclear localization signal element; sequence KKSKKGR. Over residues 474–485 the composition is skewed to basic residues; sequence KKSKKGRGRSGR. Position 476 is a phosphoserine; by PKC (S476).

It belongs to the protein kinase superfamily. AGC Ser/Thr protein kinase family. S6 kinase subfamily. Post-translationally, phosphorylated and activated by MTOR. Phosphorylation by PKC within the NLS in response to mitogenic stimuli causes cytoplasmic retention.

It is found in the cytoplasm. The protein resides in the nucleus. The enzyme catalyses L-seryl-[protein] + ATP = O-phospho-L-seryl-[protein] + ADP + H(+). It catalyses the reaction L-threonyl-[protein] + ATP = O-phospho-L-threonyl-[protein] + ADP + H(+). Phosphorylates specifically ribosomal protein S6. Seems to act downstream of mTOR signaling in response to growth factors and nutrients to promote cell proliferation, cell growth and cell cycle progression in an alternative pathway regulated by MEAK7. This is Ribosomal protein S6 kinase beta-2 (Rps6kb2) from Mus musculus (Mouse).